The primary structure comprises 59 residues: UPF0339 protein CC_2965 (59 aa).

It belongs to the UPF0339 family.

The protein is UPF0339 protein CC_2965 of Caulobacter vibrioides (strain ATCC 19089 / CIP 103742 / CB 15) (Caulobacter crescentus).